The following is a 393-amino-acid chain: 4-hydroxyphenylpyruvate dioxygenase (393 aa).

The residue at position 2 (Thr-2) is an N-acetylthreonine. VOC domains follow at residues 18 to 149 (HFHS…LVEK) and 180 to 338 (MIDH…IFTK). Lys-132 bears the N6-succinyllysine mark. His-183 is a Fe cation binding site. Ser-211, Ser-226, and Ser-250 each carry phosphoserine. Residues His-266 and Glu-349 each contribute to the Fe cation site.

Belongs to the 4HPPD family. In terms of assembly, homodimer. Requires Fe cation as cofactor.

Its subcellular location is the cytoplasm. It is found in the endoplasmic reticulum membrane. It localises to the golgi apparatus membrane. It carries out the reaction 3-(4-hydroxyphenyl)pyruvate + O2 = homogentisate + CO2. The protein operates within amino-acid degradation; L-phenylalanine degradation; acetoacetate and fumarate from L-phenylalanine: step 3/6. Functionally, catalyzes the conversion of 4-hydroxyphenylpyruvic acid to homogentisic acid, one of the steps in tyrosine catabolism. The polypeptide is 4-hydroxyphenylpyruvate dioxygenase (HPD) (Homo sapiens (Human)).